Consider the following 166-residue polypeptide: Lipoprotein signal peptidase (166 aa).

A run of 4 helical transmembrane segments spans residues A9–L29, A45–L65, W71–L91, and F100–V120. Active-site residues include D126 and D144. Residues W135–V155 form a helical membrane-spanning segment.

This sequence belongs to the peptidase A8 family.

The protein localises to the cell inner membrane. It carries out the reaction Release of signal peptides from bacterial membrane prolipoproteins. Hydrolyzes -Xaa-Yaa-Zaa-|-(S,diacylglyceryl)Cys-, in which Xaa is hydrophobic (preferably Leu), and Yaa (Ala or Ser) and Zaa (Gly or Ala) have small, neutral side chains.. It participates in protein modification; lipoprotein biosynthesis (signal peptide cleavage). Functionally, this protein specifically catalyzes the removal of signal peptides from prolipoproteins. The sequence is that of Lipoprotein signal peptidase from Burkholderia ambifaria (strain ATCC BAA-244 / DSM 16087 / CCUG 44356 / LMG 19182 / AMMD) (Burkholderia cepacia (strain AMMD)).